The following is a 1213-amino-acid chain: DNA-directed RNA polymerase subunit beta' (1213 aa).

Cys-60, Cys-62, Cys-75, and Cys-78 together coordinate Zn(2+). Mg(2+)-binding residues include Asp-450, Asp-452, and Asp-454. Residues Cys-819, Cys-893, Cys-900, and Cys-903 each contribute to the Zn(2+) site.

It belongs to the RNA polymerase beta' chain family. The RNAP catalytic core consists of 2 alpha, 1 beta, 1 beta' and 1 omega subunit. When a sigma factor is associated with the core the holoenzyme is formed, which can initiate transcription. Mg(2+) serves as cofactor. Requires Zn(2+) as cofactor.

The enzyme catalyses RNA(n) + a ribonucleoside 5'-triphosphate = RNA(n+1) + diphosphate. Its function is as follows. DNA-dependent RNA polymerase catalyzes the transcription of DNA into RNA using the four ribonucleoside triphosphates as substrates. In Streptococcus pyogenes serotype M28 (strain MGAS6180), this protein is DNA-directed RNA polymerase subunit beta'.